A 623-amino-acid polypeptide reads, in one-letter code: Putative chaperone protein ClpB2, chloroplastic (623 aa).

A Clp R domain is found at 1–123 (MNDLKFDPNV…KSEVEKLRGE (123 aa)). Repeat regions lie at residues 6 to 71 (FDPN…NQSL) and 77 to 123 (RNLG…LRGE). The i stretch occupies residues 129-375 (LKTYGTDLVE…HVKAQLDIQP (247 aa)). 172–179 (GEPGVGKT) serves as a coordination point for ATP. A coiled-coil region spans residues 368 to 462 (KAQLDIQPEE…LQEAERQHDV (95 aa)). 571–578 (GPTGVGKT) serves as a coordination point for ATP.

This sequence belongs to the ClpA/ClpB family.

This Arabidopsis thaliana (Mouse-ear cress) protein is Putative chaperone protein ClpB2, chloroplastic (CLPB2).